Reading from the N-terminus, the 268-residue chain is GTP cyclohydrolase FolE2 (268 aa).

Belongs to the GTP cyclohydrolase IV family.

The enzyme catalyses GTP + H2O = 7,8-dihydroneopterin 3'-triphosphate + formate + H(+). It functions in the pathway cofactor biosynthesis; 7,8-dihydroneopterin triphosphate biosynthesis; 7,8-dihydroneopterin triphosphate from GTP: step 1/1. Its function is as follows. Converts GTP to 7,8-dihydroneopterin triphosphate. The protein is GTP cyclohydrolase FolE2 of Paraburkholderia phymatum (strain DSM 17167 / CIP 108236 / LMG 21445 / STM815) (Burkholderia phymatum).